Here is a 959-residue protein sequence, read N- to C-terminus: MERLKAVEEKWQERWREARLFEADPQPGRRKFFITFPYPYVNAYPHLGSAFTILRVDIMARYKRMRGYNVLFPQGWHATGGPIVSSALRVREGDPRIIKTLRDMGIPEEDIPRFRDPRYWVEFFTKAWRRDLERYGMSIDWRREFYTTSLNPAYSRFIEWQYLKLREKGFVGKGRHPVVWCPKEQKVVGDHDRPDEYAGISPQEAVIIKFRGRDGLVYPALTYRPETVFGVTNLWVHPDATYLVAEVDGEERWIIGEQAARELADQGHRVVILERIEGRRLLGRIVVNPADGREVPVLPASFVRPDLGTGVVMSVPAHAPYDYVALMELKRRPETLREYGLEPGVVESLEPIQLIAVPRAEGLLVVEEVRRRGVESQMDREKLDEATREVYAREFYEGIMLETTGRFSGLKVAEAKEKVVEWLEERGAALRIYTLPQEVYCRCGARTHVKIVEDQWFLLYSKPEWKALAREAVARMEFLPGHVRRDFEAIIEALRDWAFTHKGELGTPLPWDREWVIESLSDSTIYMAYYTIAKYTQHPEKYGVEPEMLTPEVFDYVFLGAGDPGEVSRRSGIPQGLLEEMRREFLYWYPLDMRISGKDLIPNHLVFFIFHHTAIFPRELWPRAIGVNGWVLVAGEKMSKSKGNFILLRQALDWWGADATRWAEVLAGADSGLDDANFEPSVADSAVSLLSQWLDFVRENYGRPARREERWVDRWFESRLNSTIARVTRLMEEANFKTALVEAWYKLQESYRWYLRRSGGEPREDLLRRFIEVQTLLIAPFAPHTAEEAWEAMGREGFASTASWPEPDESKISPEVEAAEETVQAVLEDAREVLSLIGGADTLVVTVAAEWKYRAVEAVRRARERGASMKEALREAFKVEGVDKREAARLVQQLSRAPEVLRRAAPRSVELEALRDAAQLLQEELGVKVVVETEEDGGSPRRANALPGRPALYAEKRGG.

Positions 39–49 (PYVNAYPHLGS) match the 'HIGH' region motif. The 'KMSKS' region signature appears at 637-641 (KMSKS). Position 640 (Lys640) interacts with ATP. Positions 933 to 959 (TEEDGGSPRRANALPGRPALYAEKRGG) are disordered.

This sequence belongs to the class-I aminoacyl-tRNA synthetase family.

Its subcellular location is the cytoplasm. The catalysed reaction is tRNA(Leu) + L-leucine + ATP = L-leucyl-tRNA(Leu) + AMP + diphosphate. This chain is Leucine--tRNA ligase, found in Aeropyrum pernix (strain ATCC 700893 / DSM 11879 / JCM 9820 / NBRC 100138 / K1).